Consider the following 164-residue polypeptide: uncharacterized protein (164 aa).

This is an uncharacterized protein from Escherichia coli (strain K12).